The following is an 858-amino-acid chain: KN motif and ankyrin repeat domain-containing protein 2 (858 aa).

Residues 1 to 29 (MAQVLHVSAPFPGTPGPASPPAFPSKEPD) form a disordered region. The segment at 1-72 (MAQVLHVSAP…AVQRRPRLGS (72 aa)) is interaction with AIFM1. A compositionally biased stretch (pro residues) spans 12–23 (PGTPGPASPPAF). A phosphoserine mark is found at Ser-19, Ser-83, Ser-86, Ser-89, and Ser-92. Arg-105 bears the Omega-N-methylarginine mark. The segment at 140–182 (AAPAGLGSLTPSAAGSTSSLVGVGLPPPTPRGSGLSTPVPPSA) is disordered. Residues 148–159 (LTPSAAGSTSSL) show a composition bias toward polar residues. Thr-168 is modified (phosphothreonine). Coiled coils occupy residues 183 to 234 (GHLA…KSQK) and 282 to 313 (EAAL…QADL). Ser-323 is modified (phosphoserine). Phosphothreonine is present on Thr-329. 2 positions are modified to phosphoserine: Ser-356 and Ser-375. Disordered stretches follow at residues 412-451 (CDGA…PAHD) and 488-590 (QKEE…SSAK). Positions 421–435 (APAESSLSPPESEGA) are enriched in low complexity. The segment covering 436-446 (TQAQPEKNTGQ) has biased composition (polar residues). The span at 488 to 499 (QKEEPTDPEAHR) shows a compositional bias: basic and acidic residues. Over residues 509 to 528 (GSISPRYESSSEDSSTAENF) the composition is skewed to low complexity. Residue Ser-547 is modified to Phosphoserine. Residues 555–569 (RPKETAKAKTSREES) are compositionally biased toward basic and acidic residues. Thr-559 is subject to Phosphothreonine. The ANK 0; degenerate repeat unit spans residues 621 to 658 (RELKVAYTTVLQEWLRLACRSDAHPELVRRHLVTFRAM). ANK repeat units follow at residues 673–703 (NGNT…QVDK), 707–740 (AGYS…DVNA), 745–774 (AGQT…DVNV), 778–808 (DGST…DISI), and 812–842 (DGST…KCSF). The tract at residues 676 to 842 (TALHYSVSHA…YSRMNIKCSF (167 aa)) is interaction with NCOA1.

As to quaternary structure, interacts (non-phosphorylated form) with NCOA1; NCOA2 AND NCOA3. Interacts with AIFM1. Interacts with ARHGDIA; the interaction is direct and may regulate the interaction of ARHGDIA with RHOA, RAC1 and CDC42. Interacts (via ANK repeats 1-5) with KIF21A. Phosphorylated by casein kinase II upon estrogen stimulation. Phosphorylation induces the release by KANK2 of NCOA1 and its translocation to the nucleus where NCOA1 can activate gene transcription.

Its subcellular location is the cytoplasm. The protein resides in the mitochondrion. Involved in transcription regulation by sequestering in the cytoplasm nuclear receptor coactivators such as NCOA1, NCOA2 and NCOA3. Involved in regulation of caspase-independent apoptosis by sequestering the proapoptotic factor AIFM1 in mitochondria. Pro-apoptotic stimuli can induce its proteasomal degradation allowing the translocation of AIFM1 to the nucleus to induce apoptosis. Involved in the negative control of vitamin D receptor signaling pathway. Involved in actin stress fibers formation through its interaction with ARHGDIA and the regulation of the Rho signaling pathway. May thereby play a role in cell adhesion and migration, regulating for instance podocytes migration during development of the kidney. Through the Rho signaling pathway may also regulate cell proliferation. This is KN motif and ankyrin repeat domain-containing protein 2 (KANK2) from Bos taurus (Bovine).